Consider the following 363-residue polypeptide: S-adenosylmethionine:tRNA ribosyltransferase-isomerase (363 aa).

This sequence belongs to the QueA family. In terms of assembly, monomer.

The protein resides in the cytoplasm. The enzyme catalyses 7-aminomethyl-7-carbaguanosine(34) in tRNA + S-adenosyl-L-methionine = epoxyqueuosine(34) in tRNA + adenine + L-methionine + 2 H(+). It participates in tRNA modification; tRNA-queuosine biosynthesis. Functionally, transfers and isomerizes the ribose moiety from AdoMet to the 7-aminomethyl group of 7-deazaguanine (preQ1-tRNA) to give epoxyqueuosine (oQ-tRNA). In Mannheimia succiniciproducens (strain KCTC 0769BP / MBEL55E), this protein is S-adenosylmethionine:tRNA ribosyltransferase-isomerase.